Here is a 596-residue protein sequence, read N- to C-terminus: Nuclear receptor subfamily 2 group C member 2 (596 aa).

Ser19 bears the Phosphoserine; by MAPK mark. Residue Ser46 is modified to Phosphoserine. Residues Ser55 and Ser68 each carry the phosphoserine; by MAPK modification. A Phosphoserine modification is found at Ser98. A DNA-binding region (nuclear receptor) is located at residues Val114–Ser189. NR C4-type zinc fingers lie at residues Cys117 to Cys137 and Cys153 to Cys177. Lys192 participates in a covalent cross-link: Glycyl lysine isopeptide (Lys-Gly) (interchain with G-Cter in SUMO2). Ser219 is modified (phosphoserine). Residue Lys231 is modified to N6-acetyllysine. Residues Gly341–Glu583 form the NR LBD domain.

It belongs to the nuclear hormone receptor family. NR2 subfamily. As to quaternary structure, homodimer; can bind DNA as homodimer. Heterodimer; binds DNA as a heterodimer with NR2C1 required for chromatin remodeling and for binding to promoter regions such as globin DR1 repeats. Interacts with PCAF; the interaction preferentially occurs on the non-phosphorylated form and induces NR2C2-mediated transactivation activity and does not require the ligand-binding domain. Interacts (MAPK-mediated phosphorylated form) with NRIP1; the interaction promotes repression of NR2C2-mediated activity. Interacts with NR2C2AP; the interaction represses selective NR2C2-mediated transcriptional activity. Interacts with NLRP10. Interacts (via ligand-binding region) with transcriptional corepressor JAZF1; the interaction promotes NR2C2-mediated transcriptional repression. In terms of processing, phosphorylation on Ser-19 and Ser-68 is an important regulator of NR2C2-mediated transcriptional activity. Phosphorylation on these residues recruits the corepressor, NRIP1, leading to transcripional repression, whereas the non-phosphorylated form preferentially recruits the coactivator, PCAF.

The protein localises to the nucleus. Functionally, orphan nuclear receptor that can act as a repressor or activator of transcription. An important repressor of nuclear receptor signaling pathways such as retinoic acid receptor, retinoid X, vitamin D3 receptor, thyroid hormone receptor and estrogen receptor pathways. May regulate gene expression during the late phase of spermatogenesis. Together with NR2C1, forms the core of the DRED (direct repeat erythroid-definitive) complex that represses embryonic and fetal globin transcription including that of GATA1. Binds to hormone response elements (HREs) consisting of two 5'-AGGTCA-3' half site direct repeat consensus sequences. Plays a fundamental role in early embryonic development and embryonic stem cells. Required for normal spermatogenesis and cerebellum development. Appears to be important for neurodevelopmentally regulated behavior. Activates transcriptional activity of LHCG. Antagonist of PPARA-mediated transactivation. In Homo sapiens (Human), this protein is Nuclear receptor subfamily 2 group C member 2 (NR2C2).